Here is a 208-residue protein sequence, read N- to C-terminus: MADGDIEIKAGFVDTDLDDRKLTMIDDLNNPLAIVERVYLIWWHWADFHLHVISPHIDTITPAIVIEPELISGSNDHEFVYSIHDSGSKLSTSKSQDMFSAGMSMCKLFYTIEKMVHILVDRLKSGGVSMEEEVQIAFAGHEIAQRKAFESIINLPYNVVVTNFDPGIWGEKYLQNVKRLADKGYGYPPESPRENYKHPVSSATTARK.

Residues 184-208 (GYGYPPESPRENYKHPVSSATTARK) form a disordered region.

In terms of assembly, the T4BSS is a complex nanomachine composed of several subcomplexes. This subunit is part of the Type IV Coupling Complex (T4CC), a subcomplex composed of the DotLMNYZ core and the IcmSW-LvgA adapter subunits, linked by the C-terminal tail of DotL.

It is found in the cytoplasm. In terms of biological role, component of the Dot/Icm type IVB secretion system (T4BSS), which is used to inject bacterial effector proteins into eukaryotic host cells. Part of a subcomplex which recruits effector proteins and delivers them to the core transmembrane subcomplex. Is a critical subunit for binding a subset of effector proteins. Recognizes more than one type of binding motif. May be a critical factor that confers host specificity. Necessary for full virulence of the bacterium in guinea pigs and presumably humans. The chain is Type 4 adapter protein LvgA from Legionella pneumophila.